The primary structure comprises 943 residues: Coiled-coil and C2 domain-containing protein 1A (943 aa).

The residue at position 91 (Thr91) is a Phosphothreonine. 2 disordered regions span residues 186 to 250 (NEAD…CSPL) and 300 to 337 (DLSR…VPQP). 2 stretches are compositionally biased toward low complexity: residues 195-206 (ASGKGAAAGHSH) and 229-238 (APSTTTPTSA). A Phosphoserine modification is found at Ser248. Residues 304-319 (LPPPPDQLSPEPPLPA) are compositionally biased toward pro residues. The stretch at 339–385 (RNLLEALEQRMERYHVAAAQAKAKGDQRKARMHERIVKQYQDAIRAH) forms a coiled coil. The segment at 430–483 (NHDEGSDDEEEETPKKQNTPAASTTQLKSSPSKAPPSGPAPAGKAAPKGTSNRA) is disordered. A Phosphoserine modification is found at Ser435. Positions 445–456 (KQNTPAASTTQL) are enriched in polar residues. Residues 469 to 478 (APAGKAAPKG) show a composition bias toward low complexity. A coiled-coil region spans residues 477 to 510 (KGTSNRAQQQLAFLEGRKKQLLQAALRAKQKNDV). The C2 domain occupies 630-764 (RFEQRTFSVI…ETACEVHEIL (135 aa)).

The protein belongs to the CC2D1 family. Highly expressed in brain, expression is enriched in the gray matter and strongest in the olfactory bulb.

It is found in the cytoplasm. The protein localises to the nucleus. Its subcellular location is the cytoskeleton. The protein resides in the microtubule organizing center. It localises to the centrosome. Functionally, transcription factor that binds specifically to the DRE (dual repressor element) and represses HTR1A gene transcription in neuronal cells. The combination of calcium and ATP specifically inactivates the binding with FRE. May play a role in the altered regulation of HTR1A associated with anxiety and major depression. Mediates HDAC-independent repression of HTR1A promoter in neuronal cell. Performs essential function in controlling functional maturation of synapses. This chain is Coiled-coil and C2 domain-containing protein 1A (Cc2d1a), found in Mus musculus (Mouse).